Reading from the N-terminus, the 103-residue chain is Pro-glucagon (103 aa).

This sequence belongs to the glucagon family.

The protein resides in the secreted. Plays a key role in glucose metabolism and homeostasis. Regulates blood glucose by increasing gluconeogenesis and decreasing glycolysis. The protein is Pro-glucagon (gcg) of Aquarana catesbeiana (American bullfrog).